We begin with the raw amino-acid sequence, 351 residues long: DNA polymerase IV (351 aa).

A UmuC domain is found at 4 to 185 (IIHVDMDCFF…LPLAKIPGVG (182 aa)). Asp-8 and Asp-103 together coordinate Mg(2+). Glu-104 is a catalytic residue.

It belongs to the DNA polymerase type-Y family. Monomer. Requires Mg(2+) as cofactor.

It is found in the cytoplasm. It carries out the reaction DNA(n) + a 2'-deoxyribonucleoside 5'-triphosphate = DNA(n+1) + diphosphate. In terms of biological role, poorly processive, error-prone DNA polymerase involved in untargeted mutagenesis. Copies undamaged DNA at stalled replication forks, which arise in vivo from mismatched or misaligned primer ends. These misaligned primers can be extended by PolIV. Exhibits no 3'-5' exonuclease (proofreading) activity. May be involved in translesional synthesis, in conjunction with the beta clamp from PolIII. This is DNA polymerase IV from Escherichia coli O157:H7.